Reading from the N-terminus, the 390-residue chain is Anhydro-N-acetylmuramic acid kinase (390 aa).

9–16 (GTSLDGID) contributes to the ATP binding site.

The protein belongs to the anhydro-N-acetylmuramic acid kinase family.

It carries out the reaction 1,6-anhydro-N-acetyl-beta-muramate + ATP + H2O = N-acetyl-D-muramate 6-phosphate + ADP + H(+). Its pathway is amino-sugar metabolism; 1,6-anhydro-N-acetylmuramate degradation. It functions in the pathway cell wall biogenesis; peptidoglycan recycling. In terms of biological role, catalyzes the specific phosphorylation of 1,6-anhydro-N-acetylmuramic acid (anhMurNAc) with the simultaneous cleavage of the 1,6-anhydro ring, generating MurNAc-6-P. Is required for the utilization of anhMurNAc either imported from the medium or derived from its own cell wall murein, and thus plays a role in cell wall recycling. The sequence is that of Anhydro-N-acetylmuramic acid kinase from Bacillus cereus (strain ATCC 14579 / DSM 31 / CCUG 7414 / JCM 2152 / NBRC 15305 / NCIMB 9373 / NCTC 2599 / NRRL B-3711).